Consider the following 132-residue polypeptide: Rubredoxin-1 (132 aa).

Residues 1-53 (MSRYQCPDCQYIYDENKGEPHEGFHPNTSWNDIPKDWACPDCAVRDKVDFIFL) enclose the Rubredoxin-like domain. Fe cation contacts are provided by cysteine 6, cysteine 9, cysteine 39, and cysteine 42. Residues 108-132 (TEVLDQASTPQVVRKSSTRKKMRNK) are disordered. The span at 113 to 122 (QASTPQVVRK) shows a compositional bias: polar residues. Over residues 123–132 (SSTRKKMRNK) the composition is skewed to basic residues.

Belongs to the rubredoxin family. The cofactor is Fe(3+).

The protein localises to the cytoplasm. The protein operates within hydrocarbon metabolism; alkane degradation. Functionally, not known. Probably involved in an electron transport pathway, but not required for the hydrocarbon hydroxylating system. Seems to be non-functional. This chain is Rubredoxin-1 (alkF), found in Ectopseudomonas oleovorans (Pseudomonas oleovorans).